The chain runs to 175 residues: Shikimate kinase (175 aa).

11 to 16 (GAGKTT) is an ATP binding site. Threonine 15 contributes to the Mg(2+) binding site. Aspartate 33, arginine 57, and glycine 79 together coordinate substrate. Arginine 118 contributes to the ATP binding site. Residue arginine 140 coordinates substrate.

The protein belongs to the shikimate kinase family. In terms of assembly, monomer. Requires Mg(2+) as cofactor.

Its subcellular location is the cytoplasm. The catalysed reaction is shikimate + ATP = 3-phosphoshikimate + ADP + H(+). Its pathway is metabolic intermediate biosynthesis; chorismate biosynthesis; chorismate from D-erythrose 4-phosphate and phosphoenolpyruvate: step 5/7. In terms of biological role, catalyzes the specific phosphorylation of the 3-hydroxyl group of shikimic acid using ATP as a cosubstrate. In Phocaeicola vulgatus (strain ATCC 8482 / DSM 1447 / JCM 5826 / CCUG 4940 / NBRC 14291 / NCTC 11154) (Bacteroides vulgatus), this protein is Shikimate kinase.